Reading from the N-terminus, the 295-residue chain is Sulfotransferase 1 family member D1 (295 aa).

48 to 53 contacts 3'-phosphoadenylyl sulfate; sequence KSGTTW. Residues Phe-81 and 106–108 each bind substrate; that span reads KTH. His-108 acts as the Proton acceptor in catalysis. 3'-phosphoadenylyl sulfate contacts are provided by Arg-130 and Ser-138. Residue Phe-142 coordinates substrate. Residues Tyr-193, 227–232, and 257–259 each bind 3'-phosphoadenylyl sulfate; these read SSFSVM and RKG.

It belongs to the sulfotransferase 1 family. In terms of tissue distribution, detected in kidney and liver. Detected in kidney collecting duct cells.

It is found in the cytoplasm. Functionally, sulfotransferase with broad substrate specificity that utilizes 3'-phospho-5'-adenylyl sulfate (PAPS) as sulfonate donor to catalyze the sulfate conjugation of catecholamines, such as dopamine, prostaglandins, leukotriene E4, drugs and xenobiotic compounds. Has sulfotransferase activity towards p-nitrophenol, 2-naphthylamine and minoxidil (in vitro). Sulfonation increases the water solubility of most compounds, and therefore their renal excretion, but it can also result in bioactivation to form active metabolites. In Mus musculus (Mouse), this protein is Sulfotransferase 1 family member D1 (Sult1d1).